The chain runs to 227 residues: Putative ankyrin repeat protein L45 (227 aa).

ANK repeat units lie at residues F38–H66, C78–H107, N108–A137, N139–S167, C168–A197, and N199–K227.

The polypeptide is Putative ankyrin repeat protein L45 (Acanthamoeba polyphaga mimivirus (APMV)).